A 122-amino-acid polypeptide reads, in one-letter code: Large ribosomal subunit protein uL14 (122 aa).

Belongs to the universal ribosomal protein uL14 family. Part of the 50S ribosomal subunit. Forms a cluster with proteins L3 and L19. In the 70S ribosome, L14 and L19 interact and together make contacts with the 16S rRNA in bridges B5 and B8.

Its function is as follows. Binds to 23S rRNA. Forms part of two intersubunit bridges in the 70S ribosome. In Kineococcus radiotolerans (strain ATCC BAA-149 / DSM 14245 / SRS30216), this protein is Large ribosomal subunit protein uL14.